The chain runs to 281 residues: LC-AMP precursor 3 (281 aa).

Residues 1–19 (MKYTIIPFLLLVALTCATA) form the signal peptide. A propeptide spanning residues 20–56 (RSIDGSEKEVQEIREETPSSNEDVPFSLSANEDEEAR) is cleaved from the precursor. Position 74 is a leucine amide (Leu-74). Residues 75 to 89 (GREESLSANEDEEAR) constitute a propeptide that is removed on maturation. A Serine amide modification is found at Ser-114. Positions 115-129 (GREESFSANEDEEER) are excised as a propeptide. Leu-147 is modified (leucine amide). The propeptide occupies 148 to 162 (GREESISANEDEETR). A Leucine amide modification is found at Leu-180. A propeptide spanning residues 181–195 (GREESLSAIEDEEAR) is cleaved from the precursor. Leu-213 carries the leucine amide modification. Positions 214–228 (GREESLSANEDEEAR) are excised as a propeptide. At Leu-246 the chain carries Leucine amide. Positions 247 to 261 (GREESLSANEDEEAR) are excised as a propeptide. Leucine amide is present on Leu-279.

In terms of tissue distribution, expressed by the venom gland.

It localises to the secreted. In terms of biological role, antimicrobial peptide that acts by influencing bacterial cell membrane permeability at low concentrations and by directly disrupting structure-function at high concentrations. Shows activity against Gram-negative bacteria (S.typhimurium CGMCC 1.1174 (MIC=2.5 uM), E.coli CCTCC AB 2018675 (MIC=5 uM), S.dysenteriae CGMCC 1.1869 (MIC=2.5 uM), P.aeruginosa CGMCC 1.596 (MIC 5-10 uM), K.pneumoniae (MIC=10 uM), A.baumannii (MIC=5-10 uM)), and Gram-positive bacteria (S.aureus CMCC 26003 or MRSA ATCC 43300 (MIC=5 uM), and E.faecium (MIC=2.5-5 uM)). Inhibits biofilm formation of E.coli and S.aureus in a dose-dependent manner and disrupts established biofilms. Demonstrates minimal bacterial resistance, excellent stability, negligible mammalian cell toxicity, low hemolytic activity, and appropriate selectivity for both normal and tumor cells. When combined with traditional antibiotics, exhibits additive or synergistic therapeutic effects. In vivo, in a neutropenic mouse thigh infection model, exhibits a therapeutic effect in inhibiting bacterial proliferation. The polypeptide is LC-AMP precursor 3 (Lycosa coelestis (Wolf spider)).